A 604-amino-acid polypeptide reads, in one-letter code: Baculoviral IAP repeat-containing protein 3 (604 aa).

BIR repeat units lie at residues 29-96, 169-235, and 255-322; these read ELYR…CRFV, ENAR…CPFI, and HAAR…CEYL. Positions 292, 295, 312, and 319 each coordinate Zn(2+). One can recognise a CARD domain in the interval 439-529; the sequence is KESNDLLLIR…VLYEHLFVQQ (91 aa). The RING-type zinc-finger motif lies at 557–592; sequence CKVCMDKEVSIVFIPCGHLVVCKDCAPSLRKCPICR.

The protein belongs to the IAP family. As to quaternary structure, interacts with PRSS25; interaction inhibits apoptotic suppressor activity. The BIR motifs region interacts with TNF receptor associated factors 1 and 2 (TRAF1 and TRAF2) to form a heteromeric complex, which is then recruited to the tumor necrosis factor receptor 2 (TNFR2). Interaction with TRAF2 is required for ubiquitination of IKBKE, degradation of NFKBIA and activation of NF-kappa-B. Interacts with RIP1, RIP2, RIP3, RIP4 and USP19. Auto-ubiquitinated and degraded by the proteasome in apoptotic cells. Highly expressed in fetal lung, and kidney. In the adult, expression is mainly seen in lymphoid tissues, including spleen, thymus and peripheral blood lymphocytes.

The protein localises to the cytoplasm. It localises to the nucleus. It carries out the reaction S-ubiquitinyl-[E2 ubiquitin-conjugating enzyme]-L-cysteine + [acceptor protein]-L-lysine = [E2 ubiquitin-conjugating enzyme]-L-cysteine + N(6)-ubiquitinyl-[acceptor protein]-L-lysine.. USP19 regulates the stability of BIRC3/c-IAP2 by preventing its ubiquitination. In terms of biological role, multi-functional protein which regulates not only caspases and apoptosis, but also modulates inflammatory signaling and immunity, mitogenic kinase signaling and cell proliferation, as well as cell invasion and metastasis. Acts as an E3 ubiquitin-protein ligase regulating NF-kappa-B signaling and regulates both canonical and non-canonical NF-kappa-B signaling by acting in opposite directions: acts as a positive regulator of the canonical pathway and suppresses constitutive activation of non-canonical NF-kappa-B signaling. The target proteins for its E3 ubiquitin-protein ligase activity include: RIPK1, RIPK2, RIPK3, RIPK4, CASP3, CASP7, CASP8, IKBKE, TRAF1, and BCL10. Acts as an important regulator of innate immune signaling via regulation of Toll-like receptors (TLRs), Nodlike receptors (NLRs) and RIG-I like receptors (RLRs), collectively referred to as pattern recognition receptors (PRRs). Protects cells from spontaneous formation of the ripoptosome, a large multi-protein complex that has the capability to kill cancer cells in a caspase-dependent and caspase-independent manner. Suppresses ripoptosome formation by ubiquitinating RIPK1 and CASP8. The chain is Baculoviral IAP repeat-containing protein 3 (BIRC3) from Homo sapiens (Human).